Consider the following 118-residue polypeptide: Ribonuclease P protein component (118 aa).

The protein belongs to the RnpA family. In terms of assembly, consists of a catalytic RNA component (M1 or rnpB) and a protein subunit.

It carries out the reaction Endonucleolytic cleavage of RNA, removing 5'-extranucleotides from tRNA precursor.. Its function is as follows. RNaseP catalyzes the removal of the 5'-leader sequence from pre-tRNA to produce the mature 5'-terminus. It can also cleave other RNA substrates such as 4.5S RNA. The protein component plays an auxiliary but essential role in vivo by binding to the 5'-leader sequence and broadening the substrate specificity of the ribozyme. This Rickettsia felis (strain ATCC VR-1525 / URRWXCal2) (Rickettsia azadi) protein is Ribonuclease P protein component.